A 476-amino-acid polypeptide reads, in one-letter code: MHLFINMIFLINIVFIISIIFIERRNPQTTWAWILILTFLPILGFIIYILFGQNITREKNFKRKILDDKTKQKYLNSFKSHYKLDNISLKYKDLIMMNFNNDNSTYTQRNDIDLYFDANSLFEEMIDEINKAEKFIHMEFYIFKSDEIGKKILQALTKKAKEGVEVKLLVDSIGNSIHKKDIDKLKAAGGDFKIFFPGFCKYINLRINYRNHRKILIIDSKVAFLGGFNIGDEYLGKDKNIGHWRDTHTKIKGLAINDLEGRFLLDWSYANESDLDIDLKKYFINPHSTDLPKKIIGAQIVSSGPDHTEQQIKNGYFKIINSAKKNLFIQTPYFVPDEPMLEALRLAALSGVDVKIMLPGNPDHKFMGWIANSYFESLLNAGAKIYLYEKGFLHAKTIVADSSICSVGTANMDIRSFSLNFESNIFIYNEAISKSMEEQFFKDLKVCTKVTLESFEKRSIISRIGESIIRLVSPLM.

A run of 2 helical transmembrane segments spans residues 2–22 (HLFINMIFLINIVFIISIIFI) and 31–51 (WAWILILTFLPILGFIIYILF). 2 PLD phosphodiesterase domains span residues 207-234 (INYRNHRKILIIDSKVAFLGGFNIGDEY) and 389-416 (EKGFLHAKTIVADSSICSVGTANMDIRS). Residues His-212, Lys-214, Asp-219, His-394, Lys-396, and Asp-401 contribute to the active site.

It belongs to the phospholipase D family. Cardiolipin synthase subfamily.

It is found in the cell membrane. The catalysed reaction is 2 a 1,2-diacyl-sn-glycero-3-phospho-(1'-sn-glycerol) = a cardiolipin + glycerol. In terms of biological role, catalyzes the reversible phosphatidyl group transfer from one phosphatidylglycerol molecule to another to form cardiolipin (CL) (diphosphatidylglycerol) and glycerol. The sequence is that of Cardiolipin synthase (cls) from Clostridium perfringens (strain ATCC 13124 / DSM 756 / JCM 1290 / NCIMB 6125 / NCTC 8237 / Type A).